The sequence spans 322 residues: Lipoyl synthase (322 aa).

7 residues coordinate [4Fe-4S] cluster: cysteine 69, cysteine 74, cysteine 80, cysteine 95, cysteine 99, cysteine 102, and serine 309. Positions 81-298 (FNHGTATFMI…GVKAKALGFD (218 aa)) constitute a Radical SAM core domain.

This sequence belongs to the radical SAM superfamily. Lipoyl synthase family. The cofactor is [4Fe-4S] cluster.

The protein resides in the cytoplasm. It catalyses the reaction [[Fe-S] cluster scaffold protein carrying a second [4Fe-4S](2+) cluster] + N(6)-octanoyl-L-lysyl-[protein] + 2 oxidized [2Fe-2S]-[ferredoxin] + 2 S-adenosyl-L-methionine + 4 H(+) = [[Fe-S] cluster scaffold protein] + N(6)-[(R)-dihydrolipoyl]-L-lysyl-[protein] + 4 Fe(3+) + 2 hydrogen sulfide + 2 5'-deoxyadenosine + 2 L-methionine + 2 reduced [2Fe-2S]-[ferredoxin]. Its pathway is protein modification; protein lipoylation via endogenous pathway; protein N(6)-(lipoyl)lysine from octanoyl-[acyl-carrier-protein]: step 2/2. Functionally, catalyzes the radical-mediated insertion of two sulfur atoms into the C-6 and C-8 positions of the octanoyl moiety bound to the lipoyl domains of lipoate-dependent enzymes, thereby converting the octanoylated domains into lipoylated derivatives. This Psychromonas ingrahamii (strain DSM 17664 / CCUG 51855 / 37) protein is Lipoyl synthase.